A 289-amino-acid polypeptide reads, in one-letter code: LBH domain-containing protein 1 (289 aa).

Disordered regions lie at residues 1-36 and 205-289; these read MALV…PLWD and EGAE…ASQD. The region spanning 1 to 128 is the LBH domain; it reads MALVPGRSKE…AEAFFQDQSE (128 aa). The span at 15 to 25 shows a compositional bias: polar residues; it reads TRNSPGSSQHP.

As to expression, expressed in bladder cancer tissues (at protein level).

In Homo sapiens (Human), this protein is LBH domain-containing protein 1.